We begin with the raw amino-acid sequence, 95 residues long: Integration host factor subunit beta (95 aa).

Belongs to the bacterial histone-like protein family. In terms of assembly, heterodimer of an alpha and a beta chain.

In terms of biological role, this protein is one of the two subunits of integration host factor, a specific DNA-binding protein that functions in genetic recombination as well as in transcriptional and translational control. In Paracoccus denitrificans (strain Pd 1222), this protein is Integration host factor subunit beta.